Here is a 489-residue protein sequence, read N- to C-terminus: MSTRREVILSWLCEKRQTWRLCYLLGEAGSGKTWLAQQLQKDKHRRVITLSLVVSWQGKAAWIVTDDNAAEQGCRDSAWTRDEMAGQLLHALHRTDSRCPLIIIENAHLNHRRILDDLQRAISLIPDGQFLLIGRPDRKVERDFKKQGIELVSIGRLTEHELKASILEGQNIDQPDLLLTARVLKRIALLCRGDRRKLALAGETIRLLQQAEQTSVFTAKQWRMIYRILGDNRPRKMQLAVVMSGTIIALTCGWLLLSSFTATLPVPAWLIPVTPVVKQDMTKDIAHVVMRDSEALSVLYGVWGYEVPADSAWCDQAVRAGLACKSGNASLQTLVDQNLPWIASLKVGDKKLPVVVVRVGEASVDVLVGQQTWTLTHKWFESVWTGDYLLLWKMSPEGESTITRDSSEEEILWLETMLNRALHISTEPSAEWRPLLVEKIKQFQKSHHLKTDGVVGFSTLVHLWQVAGESAYLYRDEANISPETTVKGK.

26-33 serves as a coordination point for ATP; that stretch reads GEAGSGKT. A helical transmembrane segment spans residues 237 to 257; it reads MQLAVVMSGTIIALTCGWLLL.

Belongs to the ExeA family.

Its subcellular location is the cell membrane. Its function is as follows. May play a regulatory role under conditions of derepressed gsp gene expression. The polypeptide is Putative general secretion pathway protein A (gspA) (Escherichia coli (strain K12)).